The primary structure comprises 458 residues: KAT8 regulatory NSL complex subunit 2 (458 aa).

Lysine 78 is covalently cross-linked (Glycyl lysine isopeptide (Lys-Gly) (interchain with G-Cter in SUMO2)). The interval glutamate 126–lysine 182 is disordered. Threonine 131 carries the phosphothreonine modification. Residues serine 135–aspartate 144 are compositionally biased toward basic and acidic residues. Residues serine 147, serine 149, serine 168, serine 172, and serine 175 each carry the phosphoserine modification. Residues aspartate 167–glutamate 178 are compositionally biased toward acidic residues. The interval aspartate 308–phenylalanine 364 is required for interaction with other NSL complex members. A disordered region spans residues glutamine 419–serine 458.

Component of the NSL complex at least composed of KAT8/MOF, KANSL1, KANSL2, KANSL3, MCRS1, PHF20, OGT1/OGT, WDR5 and HCFC1.

The protein resides in the nucleus. It localises to the mitochondrion. Non-catalytic component of the NSL histone acetyltransferase complex, a multiprotein complex that mediates histone H4 acetylation at 'Lys-5'- and 'Lys-8' (H4K5ac and H4K8ac) at transcription start sites and promotes transcription initiation. Required for NSL complex stability and for transcription of intraciliary transport genes in both ciliated and non-ciliated cells by regulating histone H4 acetylation at 'Lys-5'- and 'Lys-12' (H4K5ac and H4K12ac). This is necessary for cilium assembly in ciliated cells and for organization of the microtubule cytoskeleton in non-ciliated cells. Required within the NSL complex to maintain nuclear architecture stability by promoting KAT8-mediated acetylation of lamin LMNA. The chain is KAT8 regulatory NSL complex subunit 2 (KANSL2) from Bos taurus (Bovine).